Here is a 468-residue protein sequence, read N- to C-terminus: Peroxisome proliferator-activated receptor alpha (468 aa).

Residues 99-173 constitute a DNA-binding region (nuclear receptor); the sequence is NIECRICGDK…VGMSHNAIRF (75 aa). NR C4-type zinc fingers lie at residues 102–122 and 139–161; these read CRICGDKASGYHYGVHACEGC and CDRSCKIQKKNRNKCQYCRFHKC. Positions 239-466 constitute an NR LBD domain; the sequence is FVIHDMETLC…HPLLQEIYRD (228 aa). Residues Ser-280, Tyr-314, and Tyr-464 each contribute to the indeglitazar site. The interval 304 to 433 is required for heterodimerization with RXRA; it reads DQVTLLKYGV…PKLLQKMADL (130 aa).

This sequence belongs to the nuclear hormone receptor family. NR1 subfamily. As to quaternary structure, heterodimer; with RXRA. This heterodimerization is required for DNA binding and transactivation activity. Interacts with NCOA3 coactivator. Interacts with CITED2; the interaction stimulates its transcriptional activity. Also interacts with PPARBP in vitro. Interacts with AKAP13, LPIN1, PRDM16 and coactivator NCOA6. Interacts with ASXL1 and ASXL2. Interacts with PER2. Interacts with SIRT1; the interaction seems to be modulated by NAD(+) levels. Interacts with CRY1 and CRY2. In hepatocytes, interacts with PAQR3 and HUWE1; the interactions promote PPARA poylubiquitination and HUWE1-mediated degradation. In terms of processing, ubiquitinated by E3 ubiquitin-protein ligase HUWE1; leading to proteasomal degradation. Post-translationally, phosphorylated. As to expression, skeletal muscle, liver, heart and kidney. Expressed in monocytes.

Its subcellular location is the nucleus. Functionally, ligand-activated transcription factor. Key regulator of lipid metabolism. Activated by the endogenous ligand 1-palmitoyl-2-oleoyl-sn-glycerol-3-phosphocholine (16:0/18:1-GPC). Activated by oleylethanolamide, a naturally occurring lipid that regulates satiety. Receptor for peroxisome proliferators such as hypolipidemic drugs and fatty acids. Regulates the peroxisomal beta-oxidation pathway of fatty acids. Functions as a transcription activator for the ACOX1 and P450 genes. Transactivation activity requires heterodimerization with RXRA and is antagonized by NR2C2. May be required for the propagation of clock information to metabolic pathways regulated by PER2. In Homo sapiens (Human), this protein is Peroxisome proliferator-activated receptor alpha (PPARA).